The chain runs to 341 residues: CD2 antigen cytoplasmic tail-binding protein 2 (341 aa).

Residues 1–66 are disordered; the sequence is MPKRKVTFQG…DGGSSKYDIL (66 aa). A Glycyl lysine isopeptide (Lys-Gly) (interchain with G-Cter in SUMO2) cross-link involves residue Lys-26. Lys-44 is subject to N6-acetyllysine. 3 positions are modified to phosphoserine: Ser-46, Ser-49, and Ser-118. Residues 49–58 are compositionally biased toward acidic residues; it reads SDEEEDDDDG. Disordered stretches follow at residues 131–151 and 178–199; these read RPPG…GQTS and LGAR…PQRL. Phosphoserine occurs at positions 194 and 195. Residues 280-338 form the GYF domain; it reads DVMWEYKWENTGDAELYGPFTSAQMQTWVSEGYFPDGVYCRKLDPPGGQFYNSKRIDFD.

In terms of assembly, component of the U5 snRNP complex composed of the U5 snRNA and at least PRPF6, PRPF8, SNRNP200, EFTUD2, SNRNP40, DDX23, TXNL4A and CD2BP2. Interacts directly with TXNL4A and PRPF6. Interacts (via GYF domain) with CD2 (via Pro-rich sequence in the cytoplasmic domain). Interacts with PQBP1.

It localises to the cytoplasm. The protein localises to the nucleus. Involved in pre-mRNA splicing as component of the U5 snRNP complex that is involved in spliceosome assembly. This Homo sapiens (Human) protein is CD2 antigen cytoplasmic tail-binding protein 2 (CD2BP2).